The following is a 169-amino-acid chain: Phosphopantetheine adenylyltransferase (169 aa).

Thr-14 serves as a coordination point for substrate. ATP-binding positions include 14 to 15 (TF) and His-22. Residues Lys-46, Leu-78, and Arg-92 each coordinate substrate. ATP-binding positions include 93–95 (GLR), Glu-103, and 128–134 (HSFISSS).

It belongs to the bacterial CoaD family. Homohexamer. It depends on Mg(2+) as a cofactor.

It is found in the cytoplasm. The enzyme catalyses (R)-4'-phosphopantetheine + ATP + H(+) = 3'-dephospho-CoA + diphosphate. It participates in cofactor biosynthesis; coenzyme A biosynthesis; CoA from (R)-pantothenate: step 4/5. In terms of biological role, reversibly transfers an adenylyl group from ATP to 4'-phosphopantetheine, yielding dephospho-CoA (dPCoA) and pyrophosphate. In Stenotrophomonas maltophilia (strain R551-3), this protein is Phosphopantetheine adenylyltransferase.